A 353-amino-acid polypeptide reads, in one-letter code: Iron(III) enterobactin esterase (353 aa).

It belongs to the Fes family.

It localises to the cytoplasm. It carries out the reaction Fe(III)-enterobactin + 3 H2O + H(+) = Fe(III)-[N-(2,3-dihydroxybenzoyl)-L-serine] + 2 N-(2,3-dihydroxybenzoyl)-L-serine. It catalyses the reaction Fe(III)-enterobactin + H2O = Fe(III)-[N-(2,3-dihydroxybenzoyl)-L-serine]3 + H(+). The catalysed reaction is Fe(III)-[N-(2,3-dihydroxybenzoyl)-L-serine]3 + H2O + H(+) = Fe(III)-[N-(2,3-dihydroxybenzoyl)-L-serine]2 + N-(2,3-dihydroxybenzoyl)-L-serine. The enzyme catalyses Fe(III)-[N-(2,3-dihydroxybenzoyl)-L-serine]2 + H2O + H(+) = Fe(III)-[N-(2,3-dihydroxybenzoyl)-L-serine] + N-(2,3-dihydroxybenzoyl)-L-serine. Its function is as follows. Catalyzes the hydrolysis of ferric enterobactin (Fe-Ent). Is responsible for the release of iron from ferric enterobactin. This is Iron(III) enterobactin esterase from Yersinia enterocolitica.